The primary structure comprises 697 residues: Glycine--tRNA ligase beta subunit (697 aa).

It belongs to the class-II aminoacyl-tRNA synthetase family. In terms of assembly, tetramer of two alpha and two beta subunits.

The protein localises to the cytoplasm. The enzyme catalyses tRNA(Gly) + glycine + ATP = glycyl-tRNA(Gly) + AMP + diphosphate. The protein is Glycine--tRNA ligase beta subunit of Cereibacter sphaeroides (strain ATCC 17023 / DSM 158 / JCM 6121 / CCUG 31486 / LMG 2827 / NBRC 12203 / NCIMB 8253 / ATH 2.4.1.) (Rhodobacter sphaeroides).